Consider the following 358-residue polypeptide: Plastoglobulin-1, chloroplastic (358 aa).

The transit peptide at 1–47 directs the protein to the chloroplast; that stretch reads MALLSSTLRAPLVFSKNPKPVSLSSLHSRIYLSPRSPRFPSLRFISA. The interval 48-114 is disordered; it reads AGDTGDAEKP…NDAGNGTPTF (67 aa).

The protein belongs to the PAP/fibrillin family.

Its subcellular location is the plastid. The protein resides in the chloroplast. May form together with other plastoglobulins a coat on the surface of the lipoprotein particle. The coat may contain receptors for attachment to the thylakoid membrane as well as regulatory proteins that may function in the transfer of lipids to and from the thylakoid membranes. This is Plastoglobulin-1, chloroplastic (PG1) from Pisum sativum (Garden pea).